The following is a 439-amino-acid chain: Xylose isomerase (439 aa).

Active-site residues include His-101 and Asp-104. Residues Glu-232, Glu-268, His-271, Asp-296, Asp-307, Asp-309, and Asp-339 each coordinate Mg(2+).

This sequence belongs to the xylose isomerase family. As to quaternary structure, homotetramer. It depends on Mg(2+) as a cofactor.

It localises to the cytoplasm. The catalysed reaction is alpha-D-xylose = alpha-D-xylulofuranose. This chain is Xylose isomerase, found in Histophilus somni (strain 2336) (Haemophilus somnus).